We begin with the raw amino-acid sequence, 233 residues long: NAD(P)H-hydrate epimerase (233 aa).

Residues 10–217 (AINVDLELFN…ALQRKYELNL (208 aa)) enclose the YjeF N-terminal domain. Residue 60 to 64 (NNGGD) coordinates (6S)-NADPHX. Asn-61 and Asp-125 together coordinate K(+). (6S)-NADPHX is bound by residues 129-135 (GFSFKPP) and Asp-158. Ser-161 provides a ligand contact to K(+).

The protein belongs to the NnrE/AIBP family. Requires K(+) as cofactor.

It catalyses the reaction (6R)-NADHX = (6S)-NADHX. It carries out the reaction (6R)-NADPHX = (6S)-NADPHX. In terms of biological role, catalyzes the epimerization of the S- and R-forms of NAD(P)HX, a damaged form of NAD(P)H that is a result of enzymatic or heat-dependent hydration. This is a prerequisite for the S-specific NAD(P)H-hydrate dehydratase to allow the repair of both epimers of NAD(P)HX. This Drosophila grimshawi (Hawaiian fruit fly) protein is NAD(P)H-hydrate epimerase.